The chain runs to 384 residues: Class V chitinase CHIT5a (384 aa).

An N-terminal signal peptide occupies residues 1–27; it reads MAVQKIIITPILVFLVTIFFNVSSSSS. Asparagine 29, asparagine 114, and asparagine 133 each carry an N-linked (GlcNAc...) asparagine glycan. The GH18 domain maps to 39–384; sequence GVRSAYWPAG…SKQASNAWGH (346 aa). Residue glutamate 152 is the Proton donor of the active site. Residues asparagine 195 and asparagine 234 are each glycosylated (N-linked (GlcNAc...) asparagine).

Belongs to the glycosyl hydrolase 18 family. Chitinase class V subfamily.

It carries out the reaction Random endo-hydrolysis of N-acetyl-beta-D-glucosaminide (1-&gt;4)-beta-linkages in chitin and chitodextrins.. It functions in the pathway glycan degradation; chitin degradation. Its function is as follows. Possesses chitinase activity in vitro toward glycol chitin, carboxymethyl-chitin, colloidal chitin, and the chitin oligosaccharides (N-acetylglucosamine) (GlcNAc)6 and (GlcNAc)5. Hydrolyzes (GlcNAc)6 into (GlcNAc)4 and (GlcNAc)2, or two (GlcNAc)3 molecules. Has the capacity to inhibit hyphal growth of the fungus Trichoderma viride in an agar-plate bioassay. The polypeptide is Class V chitinase CHIT5a (Medicago truncatula (Barrel medic)).